A 196-amino-acid polypeptide reads, in one-letter code: Prefoldin subunit 3 (196 aa).

Ala2 bears the N-acetylalanine mark. The residue at position 58 (Lys58) is an N6-acetyllysine.

The protein belongs to the prefoldin subunit alpha family. Heterohexamer of two PFD-alpha type and four PFD-beta type subunits. Binds to the C-terminal part of VHL.

It is found in the cytoplasm. The protein localises to the nucleus. Functionally, binds specifically to cytosolic chaperonin (c-CPN) and transfers target proteins to it. Binds to nascent polypeptide chain and promotes folding in an environment in which there are many competing pathways for nonnative proteins. The sequence is that of Prefoldin subunit 3 (Vbp1) from Mus musculus (Mouse).